A 69-amino-acid chain; its full sequence is FMRFamide-like neuropeptides 24 (69 aa).

The N-terminal stretch at M1–C25 is a signal peptide. The propeptide occupies R26–H51. Position 64 is a phenylalanine amide (F64). The propeptide occupies S68–I69.

This sequence belongs to the FARP (FMRFamide related peptide) family.

It is found in the secreted. Probable FMRFamide-like neuropeptides. Plays a role in behaviors associated with a sleep-like state induced by stress (SIS), acting in concert with the FMRFamide related peptide flp-13 and neuropeptide-like protein nlp-8. The sequence is that of FMRFamide-like neuropeptides 24 from Caenorhabditis elegans.